We begin with the raw amino-acid sequence, 102 residues long: NADH-quinone oxidoreductase subunit K (102 aa).

3 helical membrane-spanning segments follow: residues 6-26 (LIGI…GVLA), 30-50 (MLFQ…GFIA), and 63-83 (MFIL…ALFL).

It belongs to the complex I subunit 4L family. NDH-1 is composed of 14 different subunits. Subunits NuoA, H, J, K, L, M, N constitute the membrane sector of the complex.

It is found in the cell inner membrane. The enzyme catalyses a quinone + NADH + 5 H(+)(in) = a quinol + NAD(+) + 4 H(+)(out). Its function is as follows. NDH-1 shuttles electrons from NADH, via FMN and iron-sulfur (Fe-S) centers, to quinones in the respiratory chain. The immediate electron acceptor for the enzyme in this species is believed to be ubiquinone. Couples the redox reaction to proton translocation (for every two electrons transferred, four hydrogen ions are translocated across the cytoplasmic membrane), and thus conserves the redox energy in a proton gradient. This chain is NADH-quinone oxidoreductase subunit K, found in Rhodopseudomonas palustris (strain TIE-1).